Consider the following 227-residue polypeptide: NADH-quinone oxidoreductase subunit C (227 aa).

It belongs to the complex I 30 kDa subunit family. As to quaternary structure, NDH-1 is composed of 14 different subunits. Subunits NuoB, C, D, E, F, and G constitute the peripheral sector of the complex.

It is found in the cell inner membrane. It carries out the reaction a quinone + NADH + 5 H(+)(in) = a quinol + NAD(+) + 4 H(+)(out). In terms of biological role, NDH-1 shuttles electrons from NADH, via FMN and iron-sulfur (Fe-S) centers, to quinones in the respiratory chain. The immediate electron acceptor for the enzyme in this species is believed to be ubiquinone. Couples the redox reaction to proton translocation (for every two electrons transferred, four hydrogen ions are translocated across the cytoplasmic membrane), and thus conserves the redox energy in a proton gradient. The sequence is that of NADH-quinone oxidoreductase subunit C from Legionella pneumophila (strain Lens).